A 704-amino-acid chain; its full sequence is Elongation factor G (704 aa).

Residues 8–290 enclose the tr-type G domain; the sequence is ARYRNIGISA…AVIDYLPSPV (283 aa). Residues 17–24, 88–92, and 142–145 contribute to the GTP site; these read AHIDAGKT, DTPGH, and NKMD.

This sequence belongs to the TRAFAC class translation factor GTPase superfamily. Classic translation factor GTPase family. EF-G/EF-2 subfamily.

It is found in the cytoplasm. Functionally, catalyzes the GTP-dependent ribosomal translocation step during translation elongation. During this step, the ribosome changes from the pre-translocational (PRE) to the post-translocational (POST) state as the newly formed A-site-bound peptidyl-tRNA and P-site-bound deacylated tRNA move to the P and E sites, respectively. Catalyzes the coordinated movement of the two tRNA molecules, the mRNA and conformational changes in the ribosome. This is Elongation factor G from Salmonella agona (strain SL483).